The sequence spans 200 residues: Sec-independent protein translocase protein TatB (200 aa).

The helical transmembrane segment at 2 to 22 (LPDIGGTELLIIAAVALIVVG) threads the bilayer. The segment at 160-200 (KAPRKRASQKQEITVEAPKAVRAPRKRASKAGDSTASDIVS) is disordered. Residues 191–200 (GDSTASDIVS) are compositionally biased toward polar residues.

Belongs to the TatB family. As to quaternary structure, the Tat system comprises two distinct complexes: a TatABC complex, containing multiple copies of TatA, TatB and TatC subunits, and a separate TatA complex, containing only TatA subunits. Substrates initially bind to the TatABC complex, which probably triggers association of the separate TatA complex to form the active translocon.

The protein resides in the cell inner membrane. In terms of biological role, part of the twin-arginine translocation (Tat) system that transports large folded proteins containing a characteristic twin-arginine motif in their signal peptide across membranes. Together with TatC, TatB is part of a receptor directly interacting with Tat signal peptides. TatB may form an oligomeric binding site that transiently accommodates folded Tat precursor proteins before their translocation. The polypeptide is Sec-independent protein translocase protein TatB (Caulobacter vibrioides (strain ATCC 19089 / CIP 103742 / CB 15) (Caulobacter crescentus)).